We begin with the raw amino-acid sequence, 888 residues long: Isoleucine--tRNA ligase (888 aa).

Residues 61 to 71 (PYANGSIHIGH) carry the 'HIGH' region motif. Position 551 (Glu-551) interacts with L-isoleucyl-5'-AMP. Residues 592–596 (KMSKQ) carry the 'KMSKS' region motif. Lys-595 serves as a coordination point for ATP. Positions 862, 865, 879, and 882 each coordinate Zn(2+).

Belongs to the class-I aminoacyl-tRNA synthetase family. IleS type 1 subfamily. In terms of assembly, monomer. It depends on Zn(2+) as a cofactor.

It localises to the cytoplasm. It catalyses the reaction tRNA(Ile) + L-isoleucine + ATP = L-isoleucyl-tRNA(Ile) + AMP + diphosphate. Its function is as follows. Catalyzes the attachment of isoleucine to tRNA(Ile). As IleRS can inadvertently accommodate and process structurally similar amino acids such as valine, to avoid such errors it has two additional distinct tRNA(Ile)-dependent editing activities. One activity is designated as 'pretransfer' editing and involves the hydrolysis of activated Val-AMP. The other activity is designated 'posttransfer' editing and involves deacylation of mischarged Val-tRNA(Ile). The sequence is that of Isoleucine--tRNA ligase from Mycoplasmopsis pulmonis (strain UAB CTIP) (Mycoplasma pulmonis).